The primary structure comprises 383 residues: L-lactate dehydrogenase (383 aa).

The region spanning 1–380 (MIISSGNDYR…NADCLVQAIK (380 aa)) is the FMN hydroxy acid dehydrogenase domain. Position 24 (tyrosine 24) interacts with substrate. Residues serine 106 and glutamine 127 each contribute to the FMN site. Tyrosine 129 provides a ligand contact to substrate. FMN is bound at residue threonine 155. A substrate-binding site is contributed by arginine 164. An FMN-binding site is contributed by lysine 251. The active-site Proton acceptor is the histidine 275. Substrate is bound at residue arginine 278. 306-330 (DSGIRNGLDVVRMLALGADTVLLGR) contacts FMN.

Belongs to the FMN-dependent alpha-hydroxy acid dehydrogenase family. The cofactor is FMN.

The protein localises to the cell inner membrane. The catalysed reaction is (S)-lactate + A = pyruvate + AH2. Catalyzes the conversion of L-lactate to pyruvate. Is coupled to the respiratory chain. This is L-lactate dehydrogenase from Acinetobacter baumannii (strain AB307-0294).